The sequence spans 235 residues: Acyl-protein thioesterase 1 (235 aa).

Active-site charge relay system residues include S125, D181, and H213.

The protein belongs to the AB hydrolase superfamily. AB hydrolase 2 family.

It is found in the cytoplasm. The protein localises to the nucleus. The enzyme catalyses S-hexadecanoyl-L-cysteinyl-[protein] + H2O = L-cysteinyl-[protein] + hexadecanoate + H(+). Hydrolyzes fatty acids from S-acylated cysteine residues in proteins with a strong preference for palmitoylated G-alpha proteins over other acyl substrates. Mediates the deacylation of G-alpha proteins such as GPA1 in vivo, but has weak or no activity toward palmitoylated Ras proteins. Has weak lysophospholipase activity in vitro; however such activity may not exist in vivo. The protein is Acyl-protein thioesterase 1 of Gibberella zeae (strain ATCC MYA-4620 / CBS 123657 / FGSC 9075 / NRRL 31084 / PH-1) (Wheat head blight fungus).